A 428-amino-acid chain; its full sequence is Dihydroorotase (428 aa).

H60 and H62 together coordinate Zn(2+). Substrate-binding positions include 62–64 and N94; that span reads HLR. Residues D152, H179, and H232 each contribute to the Zn(2+) site. Residue N278 participates in substrate binding. A Zn(2+)-binding site is contributed by D305. The active site involves D305. H309 contributes to the substrate binding site.

This sequence belongs to the metallo-dependent hydrolases superfamily. DHOase family. Class I DHOase subfamily. Zn(2+) serves as cofactor.

The enzyme catalyses (S)-dihydroorotate + H2O = N-carbamoyl-L-aspartate + H(+). The protein operates within pyrimidine metabolism; UMP biosynthesis via de novo pathway; (S)-dihydroorotate from bicarbonate: step 3/3. Functionally, catalyzes the reversible cyclization of carbamoyl aspartate to dihydroorotate. The chain is Dihydroorotase from Ruminiclostridium cellulolyticum (strain ATCC 35319 / DSM 5812 / JCM 6584 / H10) (Clostridium cellulolyticum).